A 760-amino-acid polypeptide reads, in one-letter code: Armadillo-like helical domain-containing protein 4 (760 aa).

An N-terminal signal peptide occupies residues methionine 1–alanine 27. Residues phenylalanine 28–methionine 700 are Extracellular-facing. Disordered stretches follow at residues leucine 49 to proline 69, glycine 117 to proline 143, arginine 216 to serine 243, histidine 373 to aspartate 392, threonine 474 to arginine 495, and asparagine 536 to proline 652. An N-linked (GlcNAc...) asparagine glycan is attached at asparagine 56. Residues arginine 216–threonine 228 show a composition bias toward basic and acidic residues. Residues aspartate 380–methionine 390 are compositionally biased toward polar residues. Basic and acidic residues predominate over residues threonine 474–arginine 484. Acidic residues predominate over residues leucine 594 to glycine 635. Residues leucine 701 to isoleucine 721 form a helical membrane-spanning segment. Topologically, residues lysine 722–phenylalanine 760 are cytoplasmic. Phosphoserine is present on residues serine 755 and serine 756.

Interacts with IL6ST; this interaction prevents IL6ST protein homodimerization and bridges ARMH4 with IL6R and STAT3 and therefore inhibits phosphorylation of STAT3 at 'Tyr-705'. Interacts (via cytoplasmic tail) with RICTOR; this interaction bridges ARMH4 to the mTORC2 complex and inhibits the mTORC2 kinase activity.

Its subcellular location is the membrane. Its function is as follows. May modulate immune response and may play a role in inflammation. Down-modulates STAT3 signaling throught direct interaction with IL6ST, resulting in the inhibition of phosphorylation of STAT3 at Tyr-705. May negatively regulates AKT signaling by modulating the activity of mTORC2 complex through RICTOR interaction. This chain is Armadillo-like helical domain-containing protein 4, found in Bos taurus (Bovine).